A 64-amino-acid chain; its full sequence is Antimicrobial peptide 1 (64 aa).

An N-terminal signal peptide occupies residues methionine 1 to serine 26. 3 disulfide bridges follow: cysteine 29-cysteine 46, cysteine 36-cysteine 50, and cysteine 45-cysteine 61.

It belongs to the AMP family.

The protein localises to the secreted. Its function is as follows. Possesses antifungal and antibacterial activity. The sequence is that of Antimicrobial peptide 1 from Mesembryanthemum crystallinum (Common ice plant).